A 214-amino-acid polypeptide reads, in one-letter code: Large ribosomal subunit protein bL25 (214 aa).

The interval 187–214 (AEVAPSIEETVEPEVIKKGKKAEEEEEK) is disordered. Over residues 200 to 214 (EVIKKGKKAEEEEEK) the composition is skewed to basic and acidic residues.

The protein belongs to the bacterial ribosomal protein bL25 family. CTC subfamily. Part of the 50S ribosomal subunit; part of the 5S rRNA/L5/L18/L25 subcomplex. Contacts the 5S rRNA. Binds to the 5S rRNA independently of L5 and L18.

This is one of the proteins that binds to the 5S RNA in the ribosome where it forms part of the central protuberance. This Thermodesulfovibrio yellowstonii (strain ATCC 51303 / DSM 11347 / YP87) protein is Large ribosomal subunit protein bL25.